The primary structure comprises 145 residues: Probable WRKY transcription factor 75 (145 aa).

Basic and acidic residues predominate over residues 20-38 (SKPELHQGEEESSKVRSEG). Positions 20-55 (SKPELHQGEEESSKVRSEGCSKSVESSKKKGKKQRY) are disordered. Positions 61 to 126 (SQVDILDDGY…YEGVHSHPIE (66 aa)) form a DNA-binding region, WRKY.

This sequence belongs to the WRKY group II-c family.

Its subcellular location is the nucleus. In terms of biological role, transcription factor. Interacts specifically with the W box (5'-(T)TGAC[CT]-3'), a frequently occurring elicitor-responsive cis-acting element. The sequence is that of Probable WRKY transcription factor 75 (WRKY75) from Arabidopsis thaliana (Mouse-ear cress).